Consider the following 340-residue polypeptide: Aldo-keto reductase yakc [NADP(+)] (340 aa).

Tyr56 acts as the Proton donor in catalysis. Position 126 (His126) interacts with substrate. An NADP(+)-binding site is contributed by 208–218 (APLGRGFLTGA).

It belongs to the aldo/keto reductase family. Aldo/keto reductase 2 subfamily. In terms of assembly, monomer.

The sequence is that of Aldo-keto reductase yakc [NADP(+)] (yakc) from Schizosaccharomyces pombe (strain 972 / ATCC 24843) (Fission yeast).